The primary structure comprises 339 residues: UDP-N-acetylglucosamine--N-acetylmuramyl-(pentapeptide) pyrophosphoryl-undecaprenol N-acetylglucosamine transferase (339 aa).

UDP-N-acetyl-alpha-D-glucosamine-binding positions include 11-13 (TGG), N127, R170, S188, I235, and Q280.

It belongs to the glycosyltransferase 28 family. MurG subfamily.

The protein resides in the cell inner membrane. It carries out the reaction di-trans,octa-cis-undecaprenyl diphospho-N-acetyl-alpha-D-muramoyl-L-alanyl-D-glutamyl-meso-2,6-diaminopimeloyl-D-alanyl-D-alanine + UDP-N-acetyl-alpha-D-glucosamine = di-trans,octa-cis-undecaprenyl diphospho-[N-acetyl-alpha-D-glucosaminyl-(1-&gt;4)]-N-acetyl-alpha-D-muramoyl-L-alanyl-D-glutamyl-meso-2,6-diaminopimeloyl-D-alanyl-D-alanine + UDP + H(+). It functions in the pathway cell wall biogenesis; peptidoglycan biosynthesis. Its function is as follows. Cell wall formation. Catalyzes the transfer of a GlcNAc subunit on undecaprenyl-pyrophosphoryl-MurNAc-pentapeptide (lipid intermediate I) to form undecaprenyl-pyrophosphoryl-MurNAc-(pentapeptide)GlcNAc (lipid intermediate II). In Thermotoga maritima (strain ATCC 43589 / DSM 3109 / JCM 10099 / NBRC 100826 / MSB8), this protein is UDP-N-acetylglucosamine--N-acetylmuramyl-(pentapeptide) pyrophosphoryl-undecaprenol N-acetylglucosamine transferase.